We begin with the raw amino-acid sequence, 544 residues long: Fructose dehydrogenase large subunit (544 aa).

14–30 (GAGICGSLLAHKLVRNG) is a binding site for FAD. Catalysis depends on histidine 478, which acts as the Proton acceptor.

The protein belongs to the GMC oxidoreductase family. In terms of assembly, heterotrimer composed of FdhL, FdhS and FdhC. FAD is required as a cofactor.

Its subcellular location is the cell membrane. It carries out the reaction keto-D-fructose + a ubiquinone = 5-dehydro-D-fructose + a ubiquinol. Functionally, catalytic subunit of fructose dehydrogenase, an enzyme that catalyzes the oxidation of D-fructose to produce 5-keto-D-fructose. This chain is Fructose dehydrogenase large subunit (fdhL), found in Gluconobacter japonicus.